A 561-amino-acid polypeptide reads, in one-letter code: DNA ligase B (561 aa).

Residue Lys-125 is the N6-AMP-lysine intermediate of the active site.

It belongs to the NAD-dependent DNA ligase family. LigB subfamily.

The catalysed reaction is NAD(+) + (deoxyribonucleotide)n-3'-hydroxyl + 5'-phospho-(deoxyribonucleotide)m = (deoxyribonucleotide)n+m + AMP + beta-nicotinamide D-nucleotide.. In terms of biological role, catalyzes the formation of phosphodiester linkages between 5'-phosphoryl and 3'-hydroxyl groups in double-stranded DNA using NAD as a coenzyme and as the energy source for the reaction. This chain is DNA ligase B, found in Salmonella gallinarum (strain 287/91 / NCTC 13346).